A 194-amino-acid chain; its full sequence is Holliday junction branch migration complex subunit RuvA (194 aa).

Residues 1 to 64 form a domain I region; sequence MISSLNGILE…EDALSLFGFA (64 aa). Residues 65-143 are domain II; sequence TTEELSLFET…KNWEAGVLSQ (79 aa). Positions 144–149 are flexible linker; sequence VTEANS. The domain III stretch occupies residues 149–194; the sequence is SDILATLTALGYSSSEAAKAISSLGDNGDLPLEERIKLALNYFNNK.

Belongs to the RuvA family. In terms of assembly, homotetramer. Forms an RuvA(8)-RuvB(12)-Holliday junction (HJ) complex. HJ DNA is sandwiched between 2 RuvA tetramers; dsDNA enters through RuvA and exits via RuvB. An RuvB hexamer assembles on each DNA strand where it exits the tetramer. Each RuvB hexamer is contacted by two RuvA subunits (via domain III) on 2 adjacent RuvB subunits; this complex drives branch migration. In the full resolvosome a probable DNA-RuvA(4)-RuvB(12)-RuvC(2) complex forms which resolves the HJ.

It is found in the cytoplasm. In terms of biological role, the RuvA-RuvB-RuvC complex processes Holliday junction (HJ) DNA during genetic recombination and DNA repair, while the RuvA-RuvB complex plays an important role in the rescue of blocked DNA replication forks via replication fork reversal (RFR). RuvA specifically binds to HJ cruciform DNA, conferring on it an open structure. The RuvB hexamer acts as an ATP-dependent pump, pulling dsDNA into and through the RuvAB complex. HJ branch migration allows RuvC to scan DNA until it finds its consensus sequence, where it cleaves and resolves the cruciform DNA. The chain is Holliday junction branch migration complex subunit RuvA from Dehalococcoides mccartyi (strain CBDB1).